Here is a 216-residue protein sequence, read N- to C-terminus: uncharacterized protein (216 aa).

Residues 39–59 (VLPLTFIGSLLILILTIVYYF) traverse the membrane as a helical segment. Residues 59–108 (FTLSGSVNELKNEISKEKSKKERLLSEIKRLEELKKTLETKKAIYEVVKI) adopt a coiled-coil conformation.

It is found in the membrane. This is an uncharacterized protein from Aquifex aeolicus (strain VF5).